The chain runs to 352 residues: Zinc transporter 1 (352 aa).

A signal peptide spans 1-29 (MARTMTMRVSSLLVAVVLLAALSFQACSG). At 30 to 56 (HGGINDGDGQVDAPATPASSSGVRSKG) the chain is on the extracellular side. A helical membrane pass occupies residues 57 to 77 (LIAVKVWCLVILLVFTFAGGV). Over 78–87 (SPYFYRWNES) the chain is Cytoplasmic. Residues 88 to 108 (FLLLGTQFAAGVFLGTALMHF) traverse the membrane as a helical segment. The Extracellular portion of the chain corresponds to 109-127 (LADSTSTFKGLTTNQYPFS). A helical transmembrane segment spans residues 128-148 (FMLTCVGFLLTMLSDLVIAAV). The Cytoplasmic segment spans residues 149 to 200 (ARRSAAAGVSDNQVSEQQQRQQAEGAVMSRKEEEAAAVAHPAMLVRTSSFED). The helical transmembrane segment at 201 to 221 (AVLLIVALCFHSVFEGIAIGV) threads the bilayer. At 222–230 (SASKSEAWR) the chain is on the extracellular side. The helical transmembrane segment at 231–251 (NLWTIGLHKIFAAVAMGIALL) threads the bilayer. The Cytoplasmic portion of the chain corresponds to 252 to 262 (RMIPKRPFLMT). The chain crosses the membrane as a helical span at residues 263-283 (VVYSLAFAVSSPVGVGIGIAI). Over 284-296 (DATSQGRAADWTY) the chain is Extracellular. A helical transmembrane segment spans residues 297–317 (AISMGLATGVFIYVAINHLIA). Residues 318–330 (KGYRPHHPTAADK) lie on the Cytoplasmic side of the membrane. The helical transmembrane segment at 331–351 (PLFKFLAVLLGVAVMAVVMIW) threads the bilayer. A topological domain (extracellular) is located at residue Asp352.

It belongs to the ZIP transporter (TC 2.A.5) family. In terms of tissue distribution, expressed in vascular bundles of roots and leaves.

The protein resides in the cell membrane. Functionally, zinc transporter that may mediate zinc uptake from the rhizosphere. May also transport other divalent cations. The sequence is that of Zinc transporter 1 (ZIP1) from Oryza sativa subsp. japonica (Rice).